An 837-amino-acid chain; its full sequence is Outer membrane usher protein HifC (837 aa).

The signal sequence occupies residues 1-26; it reads MKTKIFPLNKIAFACSLLLANPLAWA. Residues Cys-813 and Cys-833 are joined by a disulfide bond.

This sequence belongs to the fimbrial export usher family.

The protein localises to the cell outer membrane. Essential for piliation. The sequence is that of Outer membrane usher protein HifC (hifC) from Haemophilus influenzae.